Here is a 90-residue protein sequence, read N- to C-terminus: MKTIPLLFLLFIYFECDGKFIRHKDESFYECGQLIGYQQYCVDACQAHGSKEKGYCKGMAPFGLPGGCYCPKLPSNRVKMCFGALESKCA.

The signal sequence occupies residues M1–G18. One can recognise an LCN-type CS-alpha/beta domain in the interval K19–A90. Intrachain disulfides connect C31–C56, C41–C68, C45–C70, and C81–C89.

Expressed by the venom gland.

The protein localises to the secreted. In terms of biological role, sodium channel (Nav) specific neurotoxin. Causes impairment of movement and mild paralysis in crickets at a dose of 0.5 ug per animal. A dose of 0.8 ug per cricket causes clear flaccid paralysis. A dose of 1.0 ug per cricket causes death within 2 hours. Is not toxic to mice at a dose of 100 ug per 20 g mouse weight. This chain is Phaiodotoxin, found in Anuroctonus phaiodactylus (Mafia scorpion).